Consider the following 436-residue polypeptide: Repulsive guidance molecule B (436 aa).

Residues 1–48 (MGVRAAPSCAAAPAAAGAEQSRRPGLWPPSPPPPLLLLLLLSLGLLHA) form the signal peptide. The N-linked (GlcNAc...) asparagine glycan is linked to asparagine 123. 2 cysteine pairs are disulfide-bonded: cysteine 142–cysteine 229 and cysteine 166–cysteine 315. Asparagine 386 carries an N-linked (GlcNAc...) asparagine glycan. A lipid anchor (GPI-anchor amidated cysteine) is attached at cysteine 415. Positions 416 to 436 (GGCRDLPVGLGLTCLILIMFL) are cleaved as a propeptide — removed in mature form.

This sequence belongs to the repulsive guidance molecule (RGM) family. In terms of assembly, homooligomer. Interacts with DRGX. Interacts with BMP2 and BMP4. Interacts with the BMP type I receptors ACVR1, BMPR1A and BMPR1B and with the BMP type II receptor ACVR2B. The functional complex with its receptor NEO1/neogenin appears to be a heterotetramer with a 2:2 stoichiometry, RGM molecules acting as staples that bring two NEO1 receptors together without interacting themselves, this arrangement leads to activation of downstream signaling via RhoA. Post-translationally, GPI-anchored. Autocatalytically cleaved at low pH; the two chains remain linked via two disulfide bonds. Detected in neonatal and adult dorsal root ganglion sensory neurons, spinal cord, and brain (at protein level). Also expressed at high levels in retinal ganglion cells of developing mouse, extending to the optic nerve (at protein level). Expressed in testis, epididymis, ovary, uterus, and pituitary.

Its subcellular location is the cell membrane. The protein localises to the membrane raft. In terms of biological role, member of the repulsive guidance molecule (RGM) family that contributes to the patterning of the developing nervous system. Acts as a bone morphogenetic protein (BMP) coreceptor that potentiates BMP signaling. Promotes neuronal adhesion. May inhibit neurite outgrowth. This is Repulsive guidance molecule B from Mus musculus (Mouse).